We begin with the raw amino-acid sequence, 142 residues long: Large ribosomal subunit protein bL17 (142 aa).

The protein belongs to the bacterial ribosomal protein bL17 family. Part of the 50S ribosomal subunit. Contacts protein L32.

The polypeptide is Large ribosomal subunit protein bL17 (Chlamydia caviae (strain ATCC VR-813 / DSM 19441 / 03DC25 / GPIC) (Chlamydophila caviae)).